Reading from the N-terminus, the 204-residue chain is Large ribosomal subunit protein uL22m (204 aa).

A mitochondrion-targeting transit peptide spans 1–27 (MAASITASVWGTLLKIHRGLTASGCLP).

It belongs to the universal ribosomal protein uL22 family. In terms of assembly, component of the mitochondrial ribosome large subunit (39S) which comprises a 16S rRNA and about 50 distinct proteins.

It localises to the mitochondrion. The sequence is that of Large ribosomal subunit protein uL22m (mrpl22) from Xenopus tropicalis (Western clawed frog).